The primary structure comprises 147 residues: Hemoglobin subunit epsilon (147 aa).

The 145-residue stretch at 3 to 147 folds into the Globin domain; it reads HFTAEEKSTI…VATALAHKYH (145 aa). 2 positions are modified to phosphoserine: Ser-14 and Ser-51. The heme b site is built by His-64 and His-93.

It belongs to the globin family. Heterotetramer of two alpha chains and two epsilon chains in early embryonic hemoglobin Gower-2; two zeta chains and two epsilon chains in early embryonic hemoglobin Gower-1. In terms of tissue distribution, red blood cells.

Functionally, the epsilon chain is a beta-type chain of early mammalian embryonic hemoglobin. This is Hemoglobin subunit epsilon (HBE1) from Cheirogaleus medius (Fat-tailed dwarf lemur).